Here is a 161-residue protein sequence, read N- to C-terminus: Cyclic pyranopterin monophosphate synthase (161 aa).

Substrate-binding positions include Leu75 to His77 and Met113 to Glu114. The active site involves Asp128.

It belongs to the MoaC family. As to quaternary structure, homohexamer; trimer of dimers.

The enzyme catalyses (8S)-3',8-cyclo-7,8-dihydroguanosine 5'-triphosphate = cyclic pyranopterin phosphate + diphosphate. It participates in cofactor biosynthesis; molybdopterin biosynthesis. Functionally, catalyzes the conversion of (8S)-3',8-cyclo-7,8-dihydroguanosine 5'-triphosphate to cyclic pyranopterin monophosphate (cPMP). The sequence is that of Cyclic pyranopterin monophosphate synthase from Cronobacter sakazakii (strain ATCC BAA-894) (Enterobacter sakazakii).